Reading from the N-terminus, the 150-residue chain is Guanine nucleotide-binding protein subunit gamma 2 (150 aa).

A compositionally biased stretch (acidic residues) spans 1 to 11 (MRGEANGEEEQ). The tract at residues 1–59 (MRGEANGEEEQQPPRRNHLRDDAEEEEEVERRAARPVSGQQQQQQRRRPTDVGGGAAMR) is disordered. Residues 65–97 (GKHRLSAAIARLDQELQSLQDELNELETMEPAS) adopt a coiled-coil conformation. Positions 71–137 (AAIARLDQEL…RWFQRVRSSR (67 aa)) constitute a G protein gamma domain.

In terms of assembly, g proteins are composed of 3 units, alpha, beta and gamma. Interacts with the beta subunit RGB1.

It is found in the cell membrane. Guanine nucleotide-binding proteins (G proteins) are involved as modulators or transducers in various transmembrane signaling systems. The protein is Guanine nucleotide-binding protein subunit gamma 2 of Oryza sativa subsp. indica (Rice).